The following is a 347-amino-acid chain: Quinolinate synthase (347 aa).

Iminosuccinate contacts are provided by histidine 47 and serine 68. Cysteine 113 is a binding site for [4Fe-4S] cluster. Residues tyrosine 139–asparagine 141 and serine 156 each bind iminosuccinate. Cysteine 200 is a binding site for [4Fe-4S] cluster. Residues histidine 226 to glutamate 228 and threonine 243 each bind iminosuccinate. [4Fe-4S] cluster is bound at residue cysteine 297.

It belongs to the quinolinate synthase family. Type 1 subfamily. The cofactor is [4Fe-4S] cluster.

The protein localises to the cytoplasm. The enzyme catalyses iminosuccinate + dihydroxyacetone phosphate = quinolinate + phosphate + 2 H2O + H(+). It participates in cofactor biosynthesis; NAD(+) biosynthesis; quinolinate from iminoaspartate: step 1/1. Catalyzes the condensation of iminoaspartate with dihydroxyacetone phosphate to form quinolinate. In Salmonella enteritidis PT4 (strain P125109), this protein is Quinolinate synthase.